The following is a 713-amino-acid chain: Polyphosphate kinase (713 aa).

Position 63 (Asn63) interacts with ATP. Mg(2+) is bound by residues Arg394 and Arg424. The active-site Phosphohistidine intermediate is His454. 3 residues coordinate ATP: Tyr487, Arg583, and His611.

It belongs to the polyphosphate kinase 1 (PPK1) family. Mg(2+) serves as cofactor. Post-translationally, an intermediate of this reaction is the autophosphorylated ppk in which a phosphate is covalently linked to a histidine residue through a N-P bond.

It carries out the reaction [phosphate](n) + ATP = [phosphate](n+1) + ADP. Functionally, catalyzes the reversible transfer of the terminal phosphate of ATP to form a long-chain polyphosphate (polyP). In Prosthecochloris aestuarii (strain DSM 271 / SK 413), this protein is Polyphosphate kinase.